The chain runs to 360 residues: uncharacterized protein (360 aa).

4-22 (KVLHIGAGGFGERWCDTFL) is a binding site for NAD(+).

Functionally, could be a NAD-dependent oxidoreductase. This is an uncharacterized protein from Sinorhizobium fredii (strain NBRC 101917 / NGR234).